A 277-amino-acid polypeptide reads, in one-letter code: Phosphate import ATP-binding protein PstB (277 aa).

The 242-residue stretch at 31–272 folds into the ABC transporter domain; the sequence is IEVPGLSLYY…PAKKQTEDYI (242 aa). 63 to 70 contacts ATP; the sequence is GPSGCGKS.

The protein belongs to the ABC transporter superfamily. Phosphate importer (TC 3.A.1.7) family. The complex is composed of two ATP-binding proteins (PstB), two transmembrane proteins (PstC and PstA) and a solute-binding protein (PstS).

Its subcellular location is the cell inner membrane. The enzyme catalyses phosphate(out) + ATP + H2O = ADP + 2 phosphate(in) + H(+). In terms of biological role, part of the ABC transporter complex PstSACB involved in phosphate import. Responsible for energy coupling to the transport system. This chain is Phosphate import ATP-binding protein PstB, found in Pseudomonas fluorescens (strain ATCC BAA-477 / NRRL B-23932 / Pf-5).